Consider the following 92-residue polypeptide: Progonadoliberin-1 (92 aa).

Residues M1–A23 form the signal peptide. Q24 carries the pyrrolidone carboxylic acid modification. Position 33 is a glycine amide (G33).

It belongs to the GnRH family.

The protein resides in the secreted. Stimulates the secretion of gonadotropins. The chain is Progonadoliberin-1 (GNRH1) from Gallus gallus (Chicken).